The sequence spans 448 residues: U-box domain-containing protein 30 (448 aa).

The U-box domain occupies 63–137 (DIPSVFICPI…YTWFSQKYVL (75 aa)). 2 ARM repeats span residues 179–219 (LMAR…SLDL) and 221–260 (SDSK…GLVE).

The catalysed reaction is S-ubiquitinyl-[E2 ubiquitin-conjugating enzyme]-L-cysteine + [acceptor protein]-L-lysine = [E2 ubiquitin-conjugating enzyme]-L-cysteine + N(6)-ubiquitinyl-[acceptor protein]-L-lysine.. The protein operates within protein modification; protein ubiquitination. Functions as an E3 ubiquitin ligase. This chain is U-box domain-containing protein 30 (PUB30), found in Arabidopsis thaliana (Mouse-ear cress).